A 93-amino-acid polypeptide reads, in one-letter code: YcgL domain-containing protein AHA_2135 (93 aa).

Positions 1–85 constitute a YcgL domain; sequence MLCAVYKSRK…PPENLLEQHK (85 aa).

The protein is YcgL domain-containing protein AHA_2135 of Aeromonas hydrophila subsp. hydrophila (strain ATCC 7966 / DSM 30187 / BCRC 13018 / CCUG 14551 / JCM 1027 / KCTC 2358 / NCIMB 9240 / NCTC 8049).